Consider the following 414-residue polypeptide: Histidine--tRNA ligase (414 aa).

It belongs to the class-II aminoacyl-tRNA synthetase family. In terms of assembly, homodimer.

Its subcellular location is the cytoplasm. The catalysed reaction is tRNA(His) + L-histidine + ATP = L-histidyl-tRNA(His) + AMP + diphosphate + H(+). The polypeptide is Histidine--tRNA ligase (Pelobacter propionicus (strain DSM 2379 / NBRC 103807 / OttBd1)).